A 216-amino-acid chain; its full sequence is Thymidine kinase (216 aa).

ATP is bound by residues 9-16 (GPMDSGKS) and 86-89 (DEAQ). The active-site Proton acceptor is the Glu87.

The protein belongs to the thymidine kinase family. In terms of assembly, homotetramer.

The protein resides in the cytoplasm. The catalysed reaction is thymidine + ATP = dTMP + ADP + H(+). The protein is Thymidine kinase of Cutibacterium acnes (strain DSM 16379 / KPA171202) (Propionibacterium acnes).